The chain runs to 134 residues: ATP synthase epsilon chain, chloroplastic (134 aa).

The protein belongs to the ATPase epsilon chain family. In terms of assembly, F-type ATPases have 2 components, CF(1) - the catalytic core - and CF(0) - the membrane proton channel. CF(1) has five subunits: alpha(3), beta(3), gamma(1), delta(1), epsilon(1). CF(0) has three main subunits: a, b and c.

The protein localises to the plastid. Its subcellular location is the chloroplast thylakoid membrane. Functionally, produces ATP from ADP in the presence of a proton gradient across the membrane. The polypeptide is ATP synthase epsilon chain, chloroplastic (Spinacia oleracea (Spinach)).